We begin with the raw amino-acid sequence, 189 residues long: Transcription factor FapR (189 aa).

The protein belongs to the FapR family.

Functionally, transcriptional factor involved in regulation of membrane lipid biosynthesis by repressing genes involved in fatty acid and phospholipid metabolism. This is Transcription factor FapR from Listeria innocua serovar 6a (strain ATCC BAA-680 / CLIP 11262).